The sequence spans 522 residues: Glutamate--cysteine ligase, chloroplastic (522 aa).

The N-terminal 45 residues, 1–45 (MALMSQAGSSHCIYSEKMKCISGHSSITSNMEMLKMKDICFGNIS), are a transit peptide targeting the chloroplast. C186 and C406 are oxidised to a cystine.

The protein belongs to the carboxylate-amine ligase family. Glutamate--cysteine ligase type 2 subfamily. As to quaternary structure, homodimer or monomer when oxidized or reduced, respectively. In terms of processing, the Cys-186-Cys-406 disulfide bridge is known to modulate the enzyme activity according to the redox status. The oxidized form constitutes the active enzyme.

It is found in the plastid. It localises to the chloroplast. It catalyses the reaction L-cysteine + L-glutamate + ATP = gamma-L-glutamyl-L-cysteine + ADP + phosphate + H(+). It functions in the pathway sulfur metabolism; glutathione biosynthesis; glutathione from L-cysteine and L-glutamate: step 1/2. This Nicotiana tabacum (Common tobacco) protein is Glutamate--cysteine ligase, chloroplastic (GSH1).